The chain runs to 45 residues: Large ribosomal subunit protein bL36 (45 aa).

The interval 1 to 45 is disordered; the sequence is MKVSSSIKADPSKGDKLVRRKGRLYVINKKDPNRKQRQAGPARKK.

Belongs to the bacterial ribosomal protein bL36 family.

The protein is Large ribosomal subunit protein bL36 of Chlamydia caviae (strain ATCC VR-813 / DSM 19441 / 03DC25 / GPIC) (Chlamydophila caviae).